The primary structure comprises 87 residues: Long neurotoxin LlLong (87 aa).

The N-terminal stretch at 1 to 20 is a signal peptide; it reads KTLLLTLVVVTIICLDFGYT. 5 disulfides stabilise this stretch: cysteine 23–cysteine 41, cysteine 34–cysteine 62, cysteine 47–cysteine 51, cysteine 66–cysteine 77, and cysteine 78–cysteine 83.

Belongs to the three-finger toxin family. Long-chain subfamily. Type II alpha-neurotoxin sub-subfamily. Expressed by the venom gland.

Its subcellular location is the secreted. Functionally, binds with high affinity to muscular (alpha-1/CHRNA1) and neuronal (alpha-7/CHRNA7) nicotinic acetylcholine receptor (nAChR) and inhibits acetylcholine from binding to the receptor, thereby impairing neuromuscular and neuronal transmission. This is Long neurotoxin LlLong from Laticauda laticaudata (Blue-ringed sea krait).